The primary structure comprises 398 residues: Phosphoglycerate kinase (398 aa).

Residues Asp21–Asn23, Arg36, His59–Arg62, Arg119, and Arg157 each bind substrate. Residues Lys208, Gly296, Glu327, and Gly354–Ser357 each bind ATP.

This sequence belongs to the phosphoglycerate kinase family. Monomer.

The protein resides in the cytoplasm. It carries out the reaction (2R)-3-phosphoglycerate + ATP = (2R)-3-phospho-glyceroyl phosphate + ADP. It participates in carbohydrate degradation; glycolysis; pyruvate from D-glyceraldehyde 3-phosphate: step 2/5. In Streptococcus equi subsp. equi (strain 4047), this protein is Phosphoglycerate kinase.